The following is a 253-amino-acid chain: Sugar fermentation stimulation protein homolog (253 aa).

It belongs to the SfsA family.

In Prochlorococcus marinus (strain NATL1A), this protein is Sugar fermentation stimulation protein homolog.